Reading from the N-terminus, the 1336-residue chain is MAGPQMGGSAEDHPPRKRHAAEKQKKKTVIYTKCFEFESATQRPIDRQRYDENEDLSDVEEIVSVRGFSLEEKLRSQLYQGDFVHAMEGKDFNYEYVQREALRVPLIFREKDGLGIKMPDPDFTVRDVKLLVGSRRLVDVMDVNTQKGTEMSMSQFVRYYETPEAQRDKLYNVISLEFSHTKLEHLVKRPTVVDLVDWVDNMWPQHLKEKQTEATNAIAEMKYPKVKKYCLMSVKGCFTDFHIDFGGTSVWYHVFRGGKIFWLIPPTLHNLALYEEWVLSGKQSDIFLGDRVERCQRIELKQGYTFFIPSGWIHAVYTPVDSLVFGGNILHSFNVPMQLRIYEIEDRTRVQPKFRYPFYYEMCWYVLERYVYCVTQRSHLTQEYQRESMLIDAPRKPSIDGFSSDSWLEMEEEACDQQPQEEEEKDEEGEGRDRAPKPPTDGSTSPTSTPSEDQEALGKKPKAPALRFLKRTLSNESEESVKSTTLAVDYPKTPTGSPATEVSAKWTHLTEFELKGLKALVEKLESLPENKKCVPEGIEDPQALLEGVKNVLKEHADDDPSLAITGVPVVTWPKKTPKNRAVGRPKGKLGPASAVKLAANRTTAGARRRRTRCRKCEACLRTECGECHFCKDMKKFGGPGRMKQSCIMRQCIAPVLPHTAVCLVCGEAGKEDTVEEEEGKFNLMLMECSICNEIIHPGCLKIKESEGVVNDELPNCWECPKCNHAGKTGKQKRGPGFKYASNLPGSLLKEQKMNRDNKEGQEPAKRRSECEEAPRRRSDEHSKKVPPDGLLRRKSDDVHLRKKRKYEKPQELSGRKRASSLQTSPGSSSHLSPRPPLGSSLSPWWRSSLTYFQQQLKPGKEDKLFRKKRRSWKNAEDRMALANKPLRRFKQEPEDELPEAPPKTRESDHSRSSSPTAGPSTEGAEGPEEKKKVKMRRKRRLPNKELSRELSKELNHEIQRTENSLANENQQPIKSEPESEGEEPKRPPGICERPHRFSKGLNGTPRELRHQLGPSLRSPPRVISRPPPSVSPPKCIQMERHVIRPPPISPPPDSLPLDDGAAHVMHREVWMAVFSYLSHQDLCVCMRVCRTWNRWCCDKRLWTRIDLNHCKSITPLMLSGIIRRQPVSLDLSWTNISKKQLSWLINRLPGLRDLVLSGCSWIAVSALCSSSCPLLRTLDVQWVEGLKDAQMRDLLSPPTDNRPGQMDNRSKLRNIVELRLAGLDITDASLRLIIRHMPLLSKLHLSYCNHVTDQSINLLTAVGTTTRDSLTEINLSDCNKVTDQCLSFFKRCGNICHIDLRYCKQVTKEGCEQFIAEMSVSVQFGQVEEKLLQKLS.

Residues 1–25 form a disordered region; sequence MAGPQMGGSAEDHPPRKRHAAEKQK. Residues 15–25 are compositionally biased toward basic residues; that stretch reads PRKRHAAEKQK. Phosphoserine is present on serine 57. Residues 178 to 346 enclose the JmjC domain; the sequence is FSHTKLEHLV…MQLRIYEIED (169 aa). Threonine 239 provides a ligand contact to substrate. Fe cation contacts are provided by histidine 242 and aspartate 244. Lysine 259 is a binding site for substrate. Fe cation is bound at residue histidine 314. Over residues 410–430 the composition is skewed to acidic residues; it reads MEEEACDQQPQEEEEKDEEGE. The tract at residues 410–465 is disordered; sequence MEEEACDQQPQEEEEKDEEGEGRDRAPKPPTDGSTSPTSTPSEDQEALGKKPKAPA. The segment covering 440 to 451 has biased composition (low complexity); the sequence is TDGSTSPTSTPS. Phosphoserine occurs at positions 474 and 477. Residue threonine 493 is modified to Phosphothreonine. Serine 497 is modified (phosphoserine). The segment at 606-652 adopts a CXXC-type zinc-finger fold; that stretch reads ARRRRTRCRKCEACLRTECGECHFCKDMKKFGGPGRMKQSCIMRQCI. Zn(2+)-binding residues include cysteine 613, cysteine 616, cysteine 619, cysteine 624, cysteine 627, cysteine 630, cysteine 646, cysteine 651, cysteine 662, cysteine 665, cysteine 688, cysteine 691, histidine 696, cysteine 699, cysteine 719, and cysteine 722. The segment at 659-725 adopts a PHD-type zinc-finger fold; that stretch reads TAVCLVCGEA…CWECPKCNHA (67 aa). Disordered stretches follow at residues 727–843 and 855–1034; these read KTGK…SLSP and QLKP…SPPK. Residues 749-799 show a composition bias toward basic and acidic residues; sequence KEQKMNRDNKEGQEPAKRRSECEEAPRRRSDEHSKKVPPDGLLRRKSDDVH. Over residues 819-843 the composition is skewed to low complexity; sequence SSLQTSPGSSSHLSPRPPLGSSLSP. Glycyl lysine isopeptide (Lys-Gly) (interchain with G-Cter in SUMO2) cross-links involve residues lysine 857 and lysine 890. A compositionally biased stretch (basic and acidic residues) spans 902 to 911; sequence PKTRESDHSR. Positions 932 to 941 are enriched in basic residues; sequence KVKMRRKRRL. The segment covering 942 to 960 has biased composition (basic and acidic residues); sequence PNKELSRELSKELNHEIQR. Residues 943–971 are a coiled coil; sequence NKELSRELSKELNHEIQRTENSLANENQQ. Serine 951 is modified (phosphoserine). The segment covering 961–971 has biased composition (polar residues); it reads TENSLANENQQ. Phosphoserine occurs at positions 975, 979, 1018, and 1031. Residues 1014 to 1024 show a composition bias toward low complexity; the sequence is PSLRSPPRVIS. The F-box domain maps to 1059 to 1105; that stretch reads DGAAHVMHREVWMAVFSYLSHQDLCVCMRVCRTWNRWCCDKRLWTRI. LRR repeat units lie at residues 1093-1120, 1133-1154, 1156-1182, 1222-1247, 1248-1277, 1278-1302, and 1303-1336; these read NRWCCDKRLWTRIDLNHCKSITPLMLSG, WTNISKKQLSWLINRLPGLRDL, LSGCSWIAVSALCSSSCPLLRTLDVQW, GLDITDASLRLIIRHMPLLSKLHLSY, CNHVTDQSINLLTAVGTTTRDSLTEINLSD, CNKVTDQCLSFFKRCGNICHIDLRY, and CKQVTKEGCEQFIAEMSVSVQFGQVEEKLLQKLS.

Belongs to the JHDM1 histone demethylase family. In terms of assembly, interacts with SKP1, forming heterodimers. The heterodimeric KDM2B-SKP1 complex interacts with the PCGF1-BCORL1 heterodimeric complex to form a homotetrameric polycomb repression complex 1 (PRC1.1). Directly interacts with CUL1. The SKP1-KDM2B complex interacts with UBB. It depends on Fe(2+) as a cofactor.

It is found in the nucleus. The protein resides in the nucleolus. It localises to the chromosome. It catalyses the reaction N(6),N(6)-dimethyl-L-lysyl(36)-[histone H3] + 2 2-oxoglutarate + 2 O2 = L-lysyl(36)-[histone H3] + 2 formaldehyde + 2 succinate + 2 CO2. Its activity is regulated as follows. Histone demethylase activity is inhibited by fumarate. Its function is as follows. Histone demethylase that demethylates 'Lys-4' and 'Lys-36' of histone H3, thereby playing a central role in histone code. Preferentially demethylates trimethylated H3 'Lys-4' and dimethylated H3 'Lys-36' residue while it has weak or no activity for mono- and tri-methylated H3 'Lys-36'. Preferentially binds the transcribed region of ribosomal RNA and represses the transcription of ribosomal RNA genes which inhibits cell growth and proliferation. May also serve as a substrate-recognition component of the SCF (SKP1-CUL1-F-box protein)-type E3 ubiquitin ligase complex. In Homo sapiens (Human), this protein is Lysine-specific demethylase 2B (KDM2B).